We begin with the raw amino-acid sequence, 136 residues long: Histone H3.1 (136 aa).

The segment at 1–41 is disordered; it reads MARTKQTARKSTGGKAPRKQLATKAARKSAPAAGGVKKPHR. Lysine 5 bears the N6,N6,N6-trimethyllysine; alternate mark. Lysine 5 bears the N6,N6-dimethyllysine; alternate mark. An N6-methyllysine; alternate mark is found at lysine 5 and lysine 10. Lysine 10 is subject to N6-acetyllysine; alternate. The residue at position 11 (serine 11) is a Phosphoserine. Lysine 15 carries the post-translational modification N6,N6-dimethyllysine; alternate. Lysine 15, lysine 19, lysine 24, lysine 28, and lysine 37 each carry N6-acetyllysine; alternate. Lysine 19, lysine 24, lysine 28, and lysine 37 each carry N6-methyllysine; alternate. Residues 22–33 show a composition bias toward low complexity; it reads ATKAARKSAPAA. Lysine 28 and lysine 37 each carry N6,N6,N6-trimethyllysine; alternate. N6,N6-dimethyllysine; alternate is present on residues lysine 28 and lysine 37. Residues lysine 57 and lysine 65 each carry the N6-acetyllysine modification. The residue at position 80 (lysine 80) is an N6,N6,N6-trimethyllysine; alternate. Position 80 is an N6,N6-dimethyllysine; alternate (lysine 80). Lysine 80 carries the post-translational modification N6-methyllysine; alternate.

Belongs to the histone H3 family. As to quaternary structure, the nucleosome is a histone octamer containing two molecules each of H2A, H2B, H3 and H4 assembled in one H3-H4 heterotetramer and two H2A-H2B heterodimers. The octamer wraps approximately 147 bp of DNA. Phosphorylated to form H3S10ph. H3S10ph promotes subsequent H3K14ac formation and is required for transcriptional activation through TBP recruitment to the promoters. Post-translationally, mono-, di- and trimethylated by the COMPASS complex to form H3K4me1/2/3. H3K4me activates gene expression by regulating transcription elongation and plays a role in telomere length maintenance. H3K4me enrichment correlates with transcription levels, and occurs in a 5' to 3' gradient with H3K4me3 enrichment at the 5'-end of genes, shifting to H3K4me2 and then H3K4me1. Methylated by SET2 to form H3K36me. H3K36me represses gene expression. Methylated by DOT1 to form H3K79me. H3K79me is required for association of SIR proteins with telomeric regions and for telomeric silencing. The COMPASS-mediated formation of H3K4me2/3 and the DOT1-mediated formation of H3K79me require H2BK123ub1. In terms of processing, acetylation of histone H3 leads to transcriptional activation. H3K14ac formation by GCN5 is promoted by H3S10ph. H3K14ac can also be formed by ESA1. H3K56ac formation occurs predominantly in newly synthesized H3 molecules during G1, S and G2/M of the cell cycle and may be involved in DNA repair.

Its subcellular location is the nucleus. It is found in the chromosome. In terms of biological role, core component of nucleosome. Nucleosomes wrap and compact DNA into chromatin, limiting DNA accessibility to the cellular machineries which require DNA as a template. Histones thereby play a central role in transcription regulation, DNA repair, DNA replication and chromosomal stability. DNA accessibility is regulated via a complex set of post-translational modifications of histones, also called histone code, and nucleosome remodeling. This chain is Histone H3.1 (HHT1), found in Mycosarcoma maydis (Corn smut fungus).